Here is a 141-residue protein sequence, read N- to C-terminus: Large ribosomal subunit protein bL17 (141 aa).

It belongs to the bacterial ribosomal protein bL17 family. In terms of assembly, part of the 50S ribosomal subunit. Contacts protein L32.

The protein is Large ribosomal subunit protein bL17 of Bartonella bacilliformis (strain ATCC 35685 / KC583 / Herrer 020/F12,63).